Here is a 444-residue protein sequence, read N- to C-terminus: Enolase (444 aa).

Position 40 (Ser40) interacts with Mg(2+). Phosphoserine is present on Ser40. The short motif at 102 to 106 (EWGWS) is the Pentapeptide insert element. Lys131 carries the post-translational modification N6-acetyllysine. Lys136 is covalently cross-linked (Glycyl lysine isopeptide (Lys-Gly) (interchain with G-Cter in ubiquitin)). Tyr137 carries the post-translational modification Phosphotyrosine. Residues His164 and Glu173 each coordinate substrate. Glu216 acts as the Proton donor in catalysis. Asp251 serves as a coordination point for Mg(2+). Residues 275–280 (DKSLVK) carry the DKSLVK motif motif. Mg(2+)-binding residues include Glu302 and Asp329. Residues Glu302 and Asp329 each coordinate substrate. At Thr337 the chain carries Phosphothreonine. Lys354 (proton acceptor) is an active-site residue. Lys373 is modified (N6-acetyllysine). Substrate is bound by residues 381-384 (SHRS) and Lys405.

Belongs to the enolase family. As to quaternary structure, homodimer. Forms a complex at least composed of DegP, ENO and HSP70. Interacts with G-actin. Interacts (via the DKSLVK motif) with mammalian host PLG/plasminogen (present in the mosquito blood meal); the interaction occurs at the ookinete cell surface and is required for ookinete invasion of the mosquito midgut. Interacts with A.gambiae EBP; depending on the Plasmodium species, the interaction is either involved in ookinete invasion of the mosquito midgut (P.berghei) or is dispensable (P.falciparum). Mg(2+) serves as cofactor.

It is found in the cytoplasm. The protein resides in the nucleus. Its subcellular location is the cytoskeleton. The protein localises to the cell surface. It localises to the cell membrane. It is found in the vacuole. The catalysed reaction is (2R)-2-phosphoglycerate = phosphoenolpyruvate + H2O. It participates in carbohydrate degradation; glycolysis; pyruvate from D-glyceraldehyde 3-phosphate: step 4/5. Its function is as follows. Glycolytic enzyme that catalyzes the conversion of 2-phosphoglycerate to phosphoenolpyruvate. In addition to glycolysis, involved in various processes such as parasite development and invasion. Plays an essential role during ookinete invasion of the mosquito vector midgut by mediating the interaction of the ookinete with the midgut epithelium and, further, by binding to mammalian host plasminogen in the blood meal, whose conversion to active plasmin promotes the invasion process. The polypeptide is Enolase (Plasmodium yoelii yoelii).